A 265-amino-acid polypeptide reads, in one-letter code: MLPYPQIDPVAIALGPLKVHWYGLMYLIGIGGAWWLAARRLAGFAPEWSREKLSDLVFWVALGVIAGGRLGYVLFYDLPAYLHDPSLILQVWRGGMSFHGGLLGVLLCSWIFARRNGKGFFELMDFIAPLVPIGLGAGRIGNFINAELWGKATDLPWAMIFPSDPQQLPRHPSQLYQFALEGVALFAILWFYSRRPRPTMAVSGLFALCYGIFRFIVEFVRVPDAQLGYLAFGWLTMGQLLCLPMILGGAGMMAWAYRREARLAH.

4 helical membrane-spanning segments follow: residues 10 to 30, 56 to 76, 87 to 107, and 117 to 137; these read VAIALGPLKVHWYGLMYLIGI, LVFWVALGVIAGGRLGYVLFY, LILQVWRGGMSFHGGLLGVLL, and GKGFFELMDFIAPLVPIGLGA. Position 139 (arginine 139) interacts with a 1,2-diacyl-sn-glycero-3-phospho-(1'-sn-glycerol). Helical transmembrane passes span 172 to 192, 200 to 220, and 227 to 247; these read PSQLYQFALEGVALFAILWFY, MAVSGLFALCYGIFRFIVEFV, and LGYLAFGWLTMGQLLCLPMIL.

Belongs to the Lgt family.

Its subcellular location is the cell inner membrane. It catalyses the reaction L-cysteinyl-[prolipoprotein] + a 1,2-diacyl-sn-glycero-3-phospho-(1'-sn-glycerol) = an S-1,2-diacyl-sn-glyceryl-L-cysteinyl-[prolipoprotein] + sn-glycerol 1-phosphate + H(+). It participates in protein modification; lipoprotein biosynthesis (diacylglyceryl transfer). Catalyzes the transfer of the diacylglyceryl group from phosphatidylglycerol to the sulfhydryl group of the N-terminal cysteine of a prolipoprotein, the first step in the formation of mature lipoproteins. The protein is Phosphatidylglycerol--prolipoprotein diacylglyceryl transferase of Azotobacter vinelandii (strain DJ / ATCC BAA-1303).